Consider the following 454-residue polypeptide: DNA-binding protein (454 aa).

The segment at 1 to 41 (MSHKKVVAISESSSDEEVPVAPPTAPPKKRQRKAVEEPRGH) is disordered. Y129 bears the Phosphotyrosine; by host mark. Residues C213 and H215 each contribute to the Zn(2+) site. The interval 226–260 (VEMDVNSENAQRALKENPEKTKIVSNRWGRNVVQF) is flexible loop. Residues C268, C284, C325, C327, C378, and C394 each contribute to the Zn(2+) site. The tract at residues 440-454 (TILPQGQHDDDLVLF) is C-terminal arm, DBP binding.

The protein belongs to the adenoviridae E2A DNA-binding protein family. As to quaternary structure, homomultimerizes on viral ssDNA bound to pTP. Forms a initiation complex with viral polymerase, pTP and hosts NFIA and POU2F1/OCT1. Interacts with host SRCAP.

It is found in the host nucleus. In terms of biological role, plays a role in the elongation phase of viral strand displacement replication by unwinding the template in an ATP-independent fashion, employing its capacity to form multimers. Also enhances the rate of initiation. Released from template upon second strand synthesis. Assembles in complex with viral pTP, viral pol, host NFIA and host POU2F1/OCT1 on viral origin of replication. Covers the whole ssDNA genome during synthesis. The complementary strand synthesis induces its relese from DNA template. May inhibit cellular transcription mediated by the interaction between host SRCAP and CBP. The polypeptide is DNA-binding protein (Canine adenovirus serotype 1 (strain RI261) (CAdV-1)).